Consider the following 118-residue polypeptide: Putative pterin-4-alpha-carbinolamine dehydratase (118 aa).

It belongs to the pterin-4-alpha-carbinolamine dehydratase family.

The catalysed reaction is (4aS,6R)-4a-hydroxy-L-erythro-5,6,7,8-tetrahydrobiopterin = (6R)-L-erythro-6,7-dihydrobiopterin + H2O. The chain is Putative pterin-4-alpha-carbinolamine dehydratase from Xanthomonas oryzae pv. oryzae (strain MAFF 311018).